Consider the following 686-residue polypeptide: Leucine-rich repeat-containing protein 49 (686 aa).

LRR repeat units lie at residues 113-134 (HLRL…SNLQ), 135-156 (KLIS…STLR), 157-178 (CLRV…ENLK), 179-200 (SLDV…NHLC), 201-222 (ELRV…NGLD), 223-244 (SLTE…DNLP), and 245-266 (CLQH…SCLA). The LRRCT domain maps to 279–317 (NPIAQESWYKHTVLQNMMQLRQLDMKRITEEERRMASVL). Positions 303 to 341 (MKRITEEERRMASVLAKKEEEKKRESHKQSLLKEKKRLT) form a coiled coil. Residues 360–388 (ATNEDRKDSDSPQDPCQIDGSTLSAFPEE) form a disordered region.

In terms of assembly, part of the neuronal tubulin polyglutamylase complex which contains TPGS1, TPGS2, TTLL1, LRRC49 and NICN1. Interacts with PCM1; TTLL1, TPGS1, TPGS2 and LRRC49.

The protein localises to the cytoplasm. It localises to the cytoskeleton. It is found in the microtubule organizing center. The protein resides in the centrosome. Its subcellular location is the centriolar satellite. Functionally, subunit of the tubulin polyglutamylase complex (TPGC). The complex mediates cilia and flagella polyglutamylation which is essential for their biogenesis and motility. This chain is Leucine-rich repeat-containing protein 49, found in Homo sapiens (Human).